A 307-amino-acid polypeptide reads, in one-letter code: 4-hydroxy-3-methylbut-2-enyl diphosphate reductase (307 aa).

Cys13 contacts [4Fe-4S] cluster. (2E)-4-hydroxy-3-methylbut-2-enyl diphosphate is bound by residues His42 and His75. Dimethylallyl diphosphate is bound by residues His42 and His75. Isopentenyl diphosphate contacts are provided by His42 and His75. A [4Fe-4S] cluster-binding site is contributed by Cys97. Position 125 (His125) interacts with (2E)-4-hydroxy-3-methylbut-2-enyl diphosphate. His125 is a dimethylallyl diphosphate binding site. His125 contacts isopentenyl diphosphate. Glu127 serves as the catalytic Proton donor. A (2E)-4-hydroxy-3-methylbut-2-enyl diphosphate-binding site is contributed by Thr165. Residue Cys195 coordinates [4Fe-4S] cluster. (2E)-4-hydroxy-3-methylbut-2-enyl diphosphate contacts are provided by Ser223, Ser224, Asn225, and Ser267. Dimethylallyl diphosphate contacts are provided by Ser223, Ser224, Asn225, and Ser267. Residues Ser223, Ser224, Asn225, and Ser267 each coordinate isopentenyl diphosphate.

The protein belongs to the IspH family. The cofactor is [4Fe-4S] cluster.

It carries out the reaction isopentenyl diphosphate + 2 oxidized [2Fe-2S]-[ferredoxin] + H2O = (2E)-4-hydroxy-3-methylbut-2-enyl diphosphate + 2 reduced [2Fe-2S]-[ferredoxin] + 2 H(+). The enzyme catalyses dimethylallyl diphosphate + 2 oxidized [2Fe-2S]-[ferredoxin] + H2O = (2E)-4-hydroxy-3-methylbut-2-enyl diphosphate + 2 reduced [2Fe-2S]-[ferredoxin] + 2 H(+). It functions in the pathway isoprenoid biosynthesis; dimethylallyl diphosphate biosynthesis; dimethylallyl diphosphate from (2E)-4-hydroxy-3-methylbutenyl diphosphate: step 1/1. Its pathway is isoprenoid biosynthesis; isopentenyl diphosphate biosynthesis via DXP pathway; isopentenyl diphosphate from 1-deoxy-D-xylulose 5-phosphate: step 6/6. Its function is as follows. Catalyzes the conversion of 1-hydroxy-2-methyl-2-(E)-butenyl 4-diphosphate (HMBPP) into a mixture of isopentenyl diphosphate (IPP) and dimethylallyl diphosphate (DMAPP). Acts in the terminal step of the DOXP/MEP pathway for isoprenoid precursor biosynthesis. The protein is 4-hydroxy-3-methylbut-2-enyl diphosphate reductase of Chlamydia trachomatis serovar A (strain ATCC VR-571B / DSM 19440 / HAR-13).